We begin with the raw amino-acid sequence, 137 residues long: Cytochrome c-type biogenesis protein CcmE (137 aa).

At 1-8 the chain is on the cytoplasmic side; sequence MQKGAKNR. A helical; Signal-anchor for type II membrane protein membrane pass occupies residues 9–29; sequence LITIIICFCSAVIGVSIILYN. The Periplasmic segment spans residues 30–137; sequence LEKSIVFFVP…NTVIPAKAGI (108 aa). Positions 120 and 124 each coordinate heme.

This sequence belongs to the CcmE/CycJ family.

It localises to the cell inner membrane. Heme chaperone required for the biogenesis of c-type cytochromes. Transiently binds heme delivered by CcmC and transfers the heme to apo-cytochromes in a process facilitated by CcmF and CcmH. The chain is Cytochrome c-type biogenesis protein CcmE from Rickettsia bellii (strain OSU 85-389).